Reading from the N-terminus, the 53-residue chain is UPF0391 membrane protein gsr2640 (53 aa).

The next 2 membrane-spanning stretches (helical) occupy residues 4–24 (LLWLVVVLMVIAALLGFGGVV) and 32–49 (WFLIVAAVVLAVVGFVTG).

It belongs to the UPF0391 family.

It is found in the cell membrane. This chain is UPF0391 membrane protein gsr2640, found in Gloeobacter violaceus (strain ATCC 29082 / PCC 7421).